Reading from the N-terminus, the 120-residue chain is Large ribosomal subunit protein bL20 (120 aa).

Belongs to the bacterial ribosomal protein bL20 family.

Functionally, binds directly to 23S ribosomal RNA and is necessary for the in vitro assembly process of the 50S ribosomal subunit. It is not involved in the protein synthesizing functions of that subunit. This Ureaplasma urealyticum serovar 10 (strain ATCC 33699 / Western) protein is Large ribosomal subunit protein bL20.